The primary structure comprises 383 residues: S-adenosylmethionine synthase (383 aa).

Histidine 22 serves as a coordination point for ATP. Aspartate 24 contributes to the Mg(2+) binding site. Glutamate 50 provides a ligand contact to K(+). Residues glutamate 63 and glutamine 99 each contribute to the L-methionine site. The interval 99–109 is flexible loop; sequence QSLEINQAVLK. Residues 160 to 162, aspartate 235, 241 to 242, serine 258, and lysine 262 each bind ATP; these read DMK and RK. Aspartate 235 contacts L-methionine. An L-methionine-binding site is contributed by lysine 266.

The protein belongs to the AdoMet synthase family. Homotetramer; dimer of dimers. Mg(2+) serves as cofactor. It depends on K(+) as a cofactor.

It is found in the cytoplasm. It catalyses the reaction L-methionine + ATP + H2O = S-adenosyl-L-methionine + phosphate + diphosphate. Its pathway is amino-acid biosynthesis; S-adenosyl-L-methionine biosynthesis; S-adenosyl-L-methionine from L-methionine: step 1/1. In terms of biological role, catalyzes the formation of S-adenosylmethionine (AdoMet) from methionine and ATP. The overall synthetic reaction is composed of two sequential steps, AdoMet formation and the subsequent tripolyphosphate hydrolysis which occurs prior to release of AdoMet from the enzyme. The polypeptide is S-adenosylmethionine synthase (Mycoplasma genitalium (strain ATCC 33530 / DSM 19775 / NCTC 10195 / G37) (Mycoplasmoides genitalium)).